Reading from the N-terminus, the 159-residue chain is 2-C-methyl-D-erythritol 2,4-cyclodiphosphate synthase (159 aa).

2 residues coordinate a divalent metal cation: Asp8 and His10. 4-CDP-2-C-methyl-D-erythritol 2-phosphate contacts are provided by residues Asp8 to His10 and His34 to Ser35. His42 serves as a coordination point for a divalent metal cation. Residues Asp56 to Gly58, Phe61 to Asp65, Ala100 to Leu106, Thr132 to Glu135, Phe139, and Arg142 each bind 4-CDP-2-C-methyl-D-erythritol 2-phosphate.

The protein belongs to the IspF family. Homotrimer. A divalent metal cation is required as a cofactor.

The catalysed reaction is 4-CDP-2-C-methyl-D-erythritol 2-phosphate = 2-C-methyl-D-erythritol 2,4-cyclic diphosphate + CMP. It participates in isoprenoid biosynthesis; isopentenyl diphosphate biosynthesis via DXP pathway; isopentenyl diphosphate from 1-deoxy-D-xylulose 5-phosphate: step 4/6. In terms of biological role, involved in the biosynthesis of isopentenyl diphosphate (IPP) and dimethylallyl diphosphate (DMAPP), two major building blocks of isoprenoid compounds. Catalyzes the conversion of 4-diphosphocytidyl-2-C-methyl-D-erythritol 2-phosphate (CDP-ME2P) to 2-C-methyl-D-erythritol 2,4-cyclodiphosphate (ME-CPP) with a corresponding release of cytidine 5-monophosphate (CMP). The chain is 2-C-methyl-D-erythritol 2,4-cyclodiphosphate synthase from Escherichia coli O81 (strain ED1a).